A 150-amino-acid chain; its full sequence is C-type natriuretic peptide (150 aa).

The first 31 residues, 1–31, serve as a signal peptide directing secretion; it reads MSISSSSSSSSSSSSCLLLISLMLLAASCQG. Positions 32-127 are excised as a propeptide; it reads RPDLQHRNHK…RKMFRGRTKK (96 aa). A compositionally biased stretch (low complexity) spans 60 to 73; it reads GAADGSSGEEAALS. Positions 60-109 are disordered; it reads GAADGSSGEEAALSQRAPPSIRALHPRSGRLGLRDDLEAEPPAENKPRRR. Cys-134 and Cys-150 are joined by a disulfide.

Belongs to the natriuretic peptide family. In terms of tissue distribution, expressed in brain, but not in atrium or ventricle.

It is found in the secreted. In terms of biological role, hormone which plays a role in endochondral ossification through regulation of cartilaginous growth plate chondrocytes proliferation and differentiation. May also be vasoactive and natriuretic. The polypeptide is C-type natriuretic peptide (cnp) (Acipenser transmontanus (White sturgeon)).